Here is a 236-residue protein sequence, read N- to C-terminus: uncharacterized protein (236 aa).

The segment at 186–236 (HGRGDTRNLNDITGLGHERERDRENTHYEKKPKLDSDSEVDIRSFRQDMDL) is disordered. Over residues 201–236 (GHERERDRENTHYEKKPKLDSDSEVDIRSFRQDMDL) the composition is skewed to basic and acidic residues. Serine 221 is subject to Phosphoserine.

This is an uncharacterized protein from Saccharomyces cerevisiae (strain ATCC 204508 / S288c) (Baker's yeast).